Reading from the N-terminus, the 585-residue chain is Aspartate--tRNA ligase (585 aa).

Glu169 lines the L-aspartate pocket. An aspartate region spans residues 193–196 (QLFK). Arg215 contacts L-aspartate. Residues 215–217 (RDE) and Gln224 contribute to the ATP site. His443 lines the L-aspartate pocket. Glu478 lines the ATP pocket. Arg485 contacts L-aspartate. 530 to 533 (GLDR) contacts ATP.

It belongs to the class-II aminoacyl-tRNA synthetase family. Type 1 subfamily. As to quaternary structure, homodimer.

It is found in the cytoplasm. The enzyme catalyses tRNA(Asp) + L-aspartate + ATP = L-aspartyl-tRNA(Asp) + AMP + diphosphate. Functionally, catalyzes the attachment of L-aspartate to tRNA(Asp) in a two-step reaction: L-aspartate is first activated by ATP to form Asp-AMP and then transferred to the acceptor end of tRNA(Asp). This chain is Aspartate--tRNA ligase, found in Pseudothermotoga lettingae (strain ATCC BAA-301 / DSM 14385 / NBRC 107922 / TMO) (Thermotoga lettingae).